A 204-amino-acid polypeptide reads, in one-letter code: Tetraspanin-13 (204 aa).

The Cytoplasmic portion of the chain corresponds to Met-1 to Leu-19. Residues Tyr-20–Ile-40 form a helical membrane-spanning segment. Topologically, residues Ser-41–Arg-44 are extracellular. The chain crosses the membrane as a helical span at residues Val-45–Ile-65. Over Gly-66–Gln-72 the chain is Cytoplasmic. The chain crosses the membrane as a helical span at residues Val-73–Ser-93. The Extracellular portion of the chain corresponds to Cys-94–Arg-167. N-linked (GlcNAc...) asparagine glycosylation is found at Asn-113 and Asn-137. Ser-143 bears the Phosphoserine mark. A helical membrane pass occupies residues Phe-168–Tyr-188. At Arg-189–Leu-204 the chain is on the cytoplasmic side.

Belongs to the tetraspanin (TM4SF) family.

It localises to the membrane. The protein is Tetraspanin-13 (Tspan13) of Mus musculus (Mouse).